We begin with the raw amino-acid sequence, 103 residues long: Matrix Gla protein (103 aa).

An N-terminal signal peptide occupies residues 1 to 19 (MKSLILLAILAALAVVTLC). E21 bears the 4-carboxyglutamate mark. Residues S22, S25, and S28 each carry the phosphoserine modification. In terms of domain architecture, Gla spans 51-97 (RAKVQERIRERSKPVHELNREACDDYRLCERYAMVYGYNAAYNRYFR). E56, E60, E67, and E71 each carry 4-carboxyglutamate. An intrachain disulfide couples C73 to C79. Positions 97–103 (RKRRGTK) are cleaved as a propeptide — removed in mature form; probably by carboxypeptidase N.

This sequence belongs to the osteocalcin/matrix Gla protein family. In terms of processing, requires vitamin K-dependent gamma-carboxylation for its function.

The protein localises to the secreted. Functionally, associates with the organic matrix of bone and cartilage. Thought to act as an inhibitor of bone formation. This Homo sapiens (Human) protein is Matrix Gla protein (MGP).